Consider the following 447-residue polypeptide: Tubulin beta-2 chain (447 aa).

8 residues coordinate GTP: Gln-9, Glu-67, Ser-136, Gly-140, Thr-141, Gly-142, Asn-202, and Asn-224. Residue Glu-67 coordinates Mg(2+). Over residues 411 to 425 (SNMNDLVSEYQQYQD) the composition is skewed to polar residues. The interval 411-447 (SNMNDLVSEYQQYQDATAEEDEYEEEEEDYHQEHDEM) is disordered. Over residues 427 to 440 (TAEEDEYEEEEEDY) the composition is skewed to acidic residues.

This sequence belongs to the tubulin family. In terms of assembly, dimer of alpha and beta chains. A typical microtubule is a hollow water-filled tube with an outer diameter of 25 nm and an inner diameter of 15 nM. Alpha-beta heterodimers associate head-to-tail to form protofilaments running lengthwise along the microtubule wall with the beta-tubulin subunit facing the microtubule plus end conferring a structural polarity. Microtubules usually have 13 protofilaments but different protofilament numbers can be found in some organisms and specialized cells. The cofactor is Mg(2+).

It localises to the cytoplasm. The protein resides in the cytoskeleton. Its function is as follows. Tubulin is the major constituent of microtubules, a cylinder consisting of laterally associated linear protofilaments composed of alpha- and beta-tubulin heterodimers. Microtubules grow by the addition of GTP-tubulin dimers to the microtubule end, where a stabilizing cap forms. Below the cap, tubulin dimers are in GDP-bound state, owing to GTPase activity of alpha-tubulin. The chain is Tubulin beta-2 chain (TUBB2) from Pisum sativum (Garden pea).